The primary structure comprises 181 residues: HGPRTase-like protein 2 (181 aa).

This sequence belongs to the purine/pyrimidine phosphoribosyltransferase family. Archaeal HPRT subfamily.

Its function is as follows. May catalyze a purine salvage reaction, the substrate is unknown. This chain is HGPRTase-like protein 2, found in Haloquadratum walsbyi (strain DSM 16854 / JCM 12705 / C23).